The primary structure comprises 445 residues: Glutamate-1-semialdehyde 2,1-aminomutase (445 aa).

Lys263 bears the N6-(pyridoxal phosphate)lysine mark.

This sequence belongs to the class-III pyridoxal-phosphate-dependent aminotransferase family. HemL subfamily. Pyridoxal 5'-phosphate serves as cofactor.

It is found in the cytoplasm. The enzyme catalyses (S)-4-amino-5-oxopentanoate = 5-aminolevulinate. The protein operates within porphyrin-containing compound metabolism; protoporphyrin-IX biosynthesis; 5-aminolevulinate from L-glutamyl-tRNA(Glu): step 2/2. In Haloarcula marismortui (strain ATCC 43049 / DSM 3752 / JCM 8966 / VKM B-1809) (Halobacterium marismortui), this protein is Glutamate-1-semialdehyde 2,1-aminomutase.